We begin with the raw amino-acid sequence, 508 residues long: T-complex protein 1 subunit beta (508 aa).

The protein belongs to the TCP-1 chaperonin family. As to quaternary structure, component of the T-complex protein 1 (TCP1) complex.

Its subcellular location is the cytoplasm. Functionally, molecular chaperone; assists the folding of proteins upon ATP hydrolysis. This chain is T-complex protein 1 subunit beta (CCT2), found in Encephalitozoon cuniculi (strain GB-M1) (Microsporidian parasite).